The following is a 185-amino-acid chain: Small ribosomal subunit protein uS5 (185 aa).

Positions F18–V81 constitute an S5 DRBM domain. Positions S157 to D185 are disordered. A compositionally biased stretch (basic and acidic residues) spans R176–D185.

The protein belongs to the universal ribosomal protein uS5 family. As to quaternary structure, part of the 30S ribosomal subunit. Contacts proteins S4 and S8.

Its function is as follows. With S4 and S12 plays an important role in translational accuracy. Functionally, located at the back of the 30S subunit body where it stabilizes the conformation of the head with respect to the body. This chain is Small ribosomal subunit protein uS5, found in Xanthobacter autotrophicus (strain ATCC BAA-1158 / Py2).